We begin with the raw amino-acid sequence, 161 residues long: Chaperone protein dnaJ 11, chloroplastic (161 aa).

The segment covering 1–18 (MLSSSPTSFTHPFLSSSP) has biased composition (low complexity). Positions 1-31 (MLSSSPTSFTHPFLSSSPPLSPISPPSRTAR) are disordered. A chloroplast-targeting transit peptide spans 1 to 36 (MLSSSPTSFTHPFLSSSPPLSPISPPSRTARISPPL). In terms of domain architecture, J spans 65-133 (SLYDVLEVPL…EKRSVYDRRM (69 aa)).

This sequence belongs to the DnaJ family. C/III subfamily. Expressed in roots, stems, leaves, flowers and developing siliques.

It is found in the plastid. The protein resides in the chloroplast stroma. In terms of biological role, plays a continuous role in plant development probably in the structural organization of compartments. This chain is Chaperone protein dnaJ 11, chloroplastic (ATJ11), found in Arabidopsis thaliana (Mouse-ear cress).